Consider the following 352-residue polypeptide: Beta-methylmalyl-CoA dehydratase (352 aa).

The MaoC-like domain occupies 16–129 (LGQTIVHATP…GKTGVVYVHS (114 aa)). Substrate is bound by residues 62–65 (PIDS), 85–88 (IANL), and 96–98 (GAV).

As to quaternary structure, homodimer.

The enzyme catalyses (2R,3S)-beta-methylmalyl-CoA = 2-methylfumaryl-CoA + H2O. Its function is as follows. Involved in the glyoxylate assimilation cycle used to regenerate acetyl-CoA and produce pyruvate as universal precursor for biosynthesis. Catalyzes the reversible dehydration of beta-methylmalyl-CoA ((2R,3S)-beta-methylmalyl-CoA) to yield mesaconyl-CoA (2-methylfumaryl-CoA). The polypeptide is Beta-methylmalyl-CoA dehydratase (mch) (Chloroflexus aurantiacus (strain ATCC 29366 / DSM 635 / J-10-fl)).